The primary structure comprises 743 residues: Dynein regulatory complex protein 1 homolog (743 aa).

Acidic residues-rich tracts occupy residues 1–10 (MDDNEDELEE) and 19–28 (SVEEEEEVEP). Positions 1–34 (MDDNEDELEEHQELVSDGSVEEEEEVEPDLGPVD) are disordered. Coiled-coil stretches lie at residues 175-332 (DQIE…VLMN) and 395-416 (KLHS…NNRE). The tract at residues 599–620 (NRLQGAAGGQPDEKEHRSTGDT) is disordered. The stretch at 715-742 (KMRVQYDAEVVFLRRQNEELRHLLQKFT) forms a coiled coil.

It belongs to the DRC1 family.

The chain is Dynein regulatory complex protein 1 homolog from Drosophila melanogaster (Fruit fly).